Reading from the N-terminus, the 131-residue chain is Histone H2A.2 (131 aa).

The tract at residues 1–22 (MSGGKGKAGSSEKASTSRSAKA) is disordered. Serine 2 carries the N-acetylserine modification. Residues lysine 5 and lysine 7 each carry the N6-acetyllysine modification. Glutamine 105 carries the N5-methylglutamine modification. Position 128 is a phosphoserine (serine 128). The short motif at 128–129 (SQ) is the [ST]-Q motif element.

This sequence belongs to the histone H2A family. As to quaternary structure, the nucleosome is a histone octamer containing two molecules each of H2A, H2B, H3 and H4 assembled in one H3-H4 heterotetramer and two H2A-H2B heterodimers. The octamer wraps approximately 147 bp of DNA. Phosphorylated to form H2AS128ph (gamma-H2A) in response to DNA double-strand breaks (DSBs) generated by exogenous genotoxic agents and by stalled replication forks. Phosphorylation is dependent on the DNA damage checkpoint kinases MEC1/ATR and TEL1/ATM, spreads on either side of a detected DSB site and may mark the surrounding chromatin for recruitment of proteins required for DNA damage signaling and repair. Gamma-H2A is removed from the DNA prior to the strand invasion-primer extension step of the repair process and subsequently dephosphorylated. Dephosphorylation is necessary for efficient recovery from the DNA damage checkpoint. In terms of processing, acetylated by ESA1 to form H2AK4ac and H2AK7ac.

It is found in the nucleus. The protein resides in the chromosome. Functionally, core component of nucleosome which plays a central role in DNA double strand break (DSB) repair. Nucleosomes wrap and compact DNA into chromatin, limiting DNA accessibility to the cellular machineries which require DNA as a template. Histones thereby play a central role in transcription regulation, DNA repair, DNA replication and chromosomal stability. DNA accessibility is regulated via a complex set of post-translational modifications of histones, also called histone code, and nucleosome remodeling. This chain is Histone H2A.2 (HTA2), found in Candida albicans (strain SC5314 / ATCC MYA-2876) (Yeast).